Here is a 257-residue protein sequence, read N- to C-terminus: Exosome complex component mtr3 (257 aa).

The protein belongs to the RNase PH family. As to quaternary structure, component of the RNA exosome complex. Specifically part of the catalytically inactive RNA exosome core complex (Exo-9) may associate with the catalytic subunits rrp6 and dis3 in cytoplasmic- and nuclear-specific RNA exosome complex forms. Exo-9 is formed by a hexameric base ring of RNase PH domain-containing subunits and a cap ring consisting of csl4, rrp4 and rrp40.

The protein localises to the cytoplasm. It localises to the nucleus. It is found in the nucleolus. Its function is as follows. Non-catalytic component of the RNA exosome complex which has 3'-&gt;5' exoribonuclease activity and participates in a multitude of cellular RNA processing and degradation events. In the nucleus, the RNA exosome complex is involved in proper maturation of stable RNA species such as rRNA, snRNA and snoRNA, in the elimination of RNA processing by-products and non-coding 'pervasive' transcripts, such as antisense RNA species and cryptic unstable transcripts (CUTs), and of mRNAs with processing defects, thereby limiting or excluding their export to the cytoplasm. In the cytoplasm, the RNA exosome complex is involved in general mRNA turnover and in RNA surveillance pathways, preventing translation of aberrant mRNAs. The catalytic inactive RNA exosome core complex of 9 subunits (Exo-9) is proposed to play a pivotal role in the binding and presentation of RNA for ribonucleolysis, and to serve as a scaffold for the association with catalytic subunits and accessory proteins or complexes. ski6 is part of the hexameric ring of RNase PH domain-containing subunits proposed to form a central channel which threads RNA substrates for degradation. The sequence is that of Exosome complex component mtr3 (mtr3) from Schizosaccharomyces pombe (strain 972 / ATCC 24843) (Fission yeast).